The sequence spans 1203 residues: Regulator of telomere elongation helicase 1 (1203 aa).

The region spanning 7-296 (NGVTVDFPFQ…ARVTQQGELQ (290 aa)) is the Helicase ATP-binding domain. 42-49 (SPTGTGKT) contacts ATP. Residues cysteine 145, cysteine 163, cysteine 172, and cysteine 207 each contribute to the [4Fe-4S] cluster site. The Nuclear localization signal signature appears at 151–167 (KKQESNHMQISLCRKKV). Positions 250–253 (DEAH) match the DEAH box motif. The short motif at 871-877 (QKGGRKK) is the Nuclear localization signal element. Disordered stretches follow at residues 998–1020 (QLDPGQHLNQGQPHLSAHPTSKG) and 1120–1203 (TTGK…RSKQ). The segment covering 1004–1020 (HLNQGQPHLSAHPTSKG) has biased composition (polar residues). The span at 1123–1134 (KDLELEGPRDES) shows a compositional bias: basic and acidic residues. A PIP-box motif is present at residues 1160–1167 (QSKISSFF). A compositionally biased stretch (basic and acidic residues) spans 1169–1181 (QRPDESVRSDDTT).

This sequence belongs to the helicase family. RAD3/XPD subfamily. Interacts with TERF1. Interacts (via PIP-box) with PCNA; the interaction is direct and essential for suppressing telomere fragility. Interacts with MMS19; the interaction mediates the association of RTEL1 with the cytosolic iron-sulfur protein assembly (CIA) complex. As to expression, widely expressed. Expressed in spleen, thymus, Peyer patches, kidney, and intestine. Not expressed in brain, heart, lung, skeletal muscles, skin and white fat. In the adult gonad, it is highly expressed in the testis, mainly in the spermatogonia and meiotic spermatocytes.

The protein localises to the nucleus. The enzyme catalyses ATP + H2O = ADP + phosphate + H(+). A probable ATP-dependent DNA helicase implicated in telomere-length regulation, DNA repair and the maintenance of genomic stability. Acts as an anti-recombinase to counteract toxic recombination and limit crossover during meiosis. Regulates meiotic recombination and crossover homeostasis by physically dissociating strand invasion events and thereby promotes noncrossover repair by meiotic synthesis dependent strand annealing (SDSA) as well as disassembly of D loop recombination intermediates. Also disassembles T loops and prevents telomere fragility by counteracting telomeric G4-DNA structures, which together ensure the dynamics and stability of the telomere. The protein is Regulator of telomere elongation helicase 1 of Mus musculus (Mouse).